The sequence spans 282 residues: 4-diphosphocytidyl-2-C-methyl-D-erythritol kinase (282 aa).

Residue Lys9 is part of the active site. 98–108 (PMGGGLGGGSS) is a binding site for ATP. The active site involves Asp140.

This sequence belongs to the GHMP kinase family. IspE subfamily. In terms of assembly, homodimer.

It catalyses the reaction 4-CDP-2-C-methyl-D-erythritol + ATP = 4-CDP-2-C-methyl-D-erythritol 2-phosphate + ADP + H(+). The protein operates within isoprenoid biosynthesis; isopentenyl diphosphate biosynthesis via DXP pathway; isopentenyl diphosphate from 1-deoxy-D-xylulose 5-phosphate: step 3/6. Catalyzes the phosphorylation of the position 2 hydroxy group of 4-diphosphocytidyl-2C-methyl-D-erythritol. The polypeptide is 4-diphosphocytidyl-2-C-methyl-D-erythritol kinase (Salmonella paratyphi B (strain ATCC BAA-1250 / SPB7)).